The chain runs to 519 residues: ATP synthase subunit alpha (519 aa).

175 to 182 (GDRQTGKT) is a binding site for ATP.

This sequence belongs to the ATPase alpha/beta chains family. In terms of assembly, F-type ATPases have 2 components, CF(1) - the catalytic core - and CF(0) - the membrane proton channel. CF(1) has five subunits: alpha(3), beta(3), gamma(1), delta(1), epsilon(1). CF(0) has three main subunits: a(1), b(2) and c(9-12). The alpha and beta chains form an alternating ring which encloses part of the gamma chain. CF(1) is attached to CF(0) by a central stalk formed by the gamma and epsilon chains, while a peripheral stalk is formed by the delta and b chains.

It localises to the cell inner membrane. It carries out the reaction ATP + H2O + 4 H(+)(in) = ADP + phosphate + 5 H(+)(out). Its function is as follows. Produces ATP from ADP in the presence of a proton gradient across the membrane. The alpha chain is a regulatory subunit. The protein is ATP synthase subunit alpha of Acinetobacter baylyi (strain ATCC 33305 / BD413 / ADP1).